The chain runs to 235 residues: MAEKVNNFPPLPKFIPLKPCFYQDFEADIPPQHLSMTKRLYYLWMLNSVTLAVNLVGCLAWLIGGGGATNFGLAFLWLILFTPCSYVCWFRPIYKAFKTDSSFSFMAFFFTFMAQLVISIIQAVGIPGWGVCGWIATISFFGTSIGSAVVMLIPTVMFTVMAVFSFIALSMVHKFYRGSGGSLSKAQEEWTTGAWKNPHVQQAAQNAAMGAAQGAMNQPQTQYSATPNYTYSNEM.

At 1–39 the chain is on the cytoplasmic side; it reads MAEKVNNFPPLPKFIPLKPCFYQDFEADIPPQHLSMTKR. Residues 40 to 60 traverse the membrane as a helical segment; sequence LYYLWMLNSVTLAVNLVGCLA. Topologically, residues 61–67 are extracellular; it reads WLIGGGG. A helical membrane pass occupies residues 68–88; the sequence is ATNFGLAFLWLILFTPCSYVC. The Cytoplasmic segment spans residues 89-102; that stretch reads WFRPIYKAFKTDSS. Residues 103-125 traverse the membrane as a helical segment; it reads FSFMAFFFTFMAQLVISIIQAVG. Residues 126–148 lie on the Extracellular side of the membrane; sequence IPGWGVCGWIATISFFGTSIGSA. The helical transmembrane segment at 149-169 threads the bilayer; that stretch reads VVMLIPTVMFTVMAVFSFIAL. The Cytoplasmic portion of the chain corresponds to 170–235; sequence SMVHKFYRGS…TPNYTYSNEM (66 aa).

It belongs to the SCAMP family. SCAMP5 subfamily. Interacts (via C-terminal part) with SYT1 and SYT2; interaction with synaptotagmins making a link with the SNARE molecules. Interacts with SLC9A7.

Its subcellular location is the cell membrane. It localises to the golgi apparatus membrane. The protein localises to the golgi apparatus. It is found in the trans-Golgi network membrane. The protein resides in the recycling endosome membrane. Its subcellular location is the cytoplasmic vesicle. It localises to the secretory vesicle. The protein localises to the synaptic vesicle membrane. Functionally, required for the calcium-dependent exocytosis of signal sequence-containing cytokines such as CCL5. Probably acts in cooperation with the SNARE machinery. This Pongo abelii (Sumatran orangutan) protein is Secretory carrier-associated membrane protein 5 (SCAMP5).